The following is a 93-amino-acid chain: MSKGHSLQDPFLNALRKERIPVSIFLVNGIKLQGQIESFDQYVVLLKNAVSQMVYKHAISTVVPARNPRATGNPAMAAGATAAPAADEGYGNQ.

Residues 9 to 68 (DPFLNALRKERIPVSIFLVNGIKLQGQIESFDQYVVLLKNAVSQMVYKHAISTVVPARNP) enclose the Sm domain. Over residues 74–86 (PAMAAGATAAPAA) the composition is skewed to low complexity. The disordered stretch occupies residues 74–93 (PAMAAGATAAPAADEGYGNQ).

This sequence belongs to the Hfq family. Homohexamer.

Its function is as follows. RNA chaperone that binds small regulatory RNA (sRNAs) and mRNAs to facilitate mRNA translational regulation in response to envelope stress, environmental stress and changes in metabolite concentrations. Also binds with high specificity to tRNAs. The polypeptide is RNA-binding protein Hfq (Alcanivorax borkumensis (strain ATCC 700651 / DSM 11573 / NCIMB 13689 / SK2)).